The primary structure comprises 218 residues: dTTP/UTP pyrophosphatase (218 aa).

The active-site Proton acceptor is aspartate 69.

The protein belongs to the Maf family. YhdE subfamily. Requires a divalent metal cation as cofactor.

The protein localises to the cytoplasm. The catalysed reaction is dTTP + H2O = dTMP + diphosphate + H(+). It carries out the reaction UTP + H2O = UMP + diphosphate + H(+). In terms of biological role, nucleoside triphosphate pyrophosphatase that hydrolyzes dTTP and UTP. May have a dual role in cell division arrest and in preventing the incorporation of modified nucleotides into cellular nucleic acids. The protein is dTTP/UTP pyrophosphatase of Thermomicrobium roseum (strain ATCC 27502 / DSM 5159 / P-2).